Here is a 557-residue protein sequence, read N- to C-terminus: Leucine-rich glioma-inactivated protein 1 (557 aa).

A signal peptide spans Met-1–Gly-34. In terms of domain architecture, LRRNT spans Lys-35–Leu-72. LRR repeat units follow at residues Ser-92 to Gly-113, His-116 to Gly-137, and Ser-140 to Gly-161. Positions Asn-173 to Ile-223 constitute an LRRCT domain. Residue Asn-192 is glycosylated (N-linked (GlcNAc...) asparagine). 7 EAR repeats span residues Glu-225 to His-267, Thr-271 to Gly-313, Lys-317 to Gly-364, Gly-366 to Lys-415, Leu-419 to Gly-462, Ser-464 to Ala-506, and Lys-510 to Ile-552. N-linked (GlcNAc...) asparagine glycosylation occurs at Asn-277. Asn-422 is a glycosylation site (N-linked (GlcNAc...) asparagine).

As to quaternary structure, oligomer. Interacts with KCNA1 within a complex containing KCNA1, KCNA4 and KCNAB1. Can bind to ADAM11 and ADAM23. Part of a complex containing ADAM22, DLG4/PSD95 and CACNG2 (stargazin). Glycosylated. Expressed in brain. High levels found in hippocampus, thalamic nuclei, neocortex, and molecular and granule cell layers of the cerebellum.

It is found in the secreted. The protein resides in the synapse. The protein localises to the cytoplasm. Functionally, plays a role in suppressing the production of MMP1/3 through the phosphatidylinositol 3-kinase/ERK pathway. Regulates voltage-gated potassium channels assembled from KCNA1, KCNA4 and KCNAB1. It slows down channel inactivation by precluding channel closure mediated by the KCNAB1 subunit. Ligand for ADAM22 that positively regulates synaptic transmission mediated by AMPA-type glutamate receptors. In Rattus norvegicus (Rat), this protein is Leucine-rich glioma-inactivated protein 1 (Lgi1).